The following is a 46-amino-acid chain: Bacteriocin acidocin 8912 (46 aa).

The propeptide occupies 1–20; the sequence is MISSHQKTLTDKELALISGG.

It localises to the secreted. In terms of biological role, has a bactericidal effect on sensitive cells but not a bacteriolytic effect. The chain is Bacteriocin acidocin 8912 (acdT) from Lactobacillus acidophilus.